The following is a 1393-amino-acid chain: DNA glycosylase/AP lyase ROS1 (1393 aa).

Disordered regions lie at residues 1–25 (MEKQRREESSFQQPPWIPQTPMKPF), 98–186 (SLSS…TSTR), and 237–265 (LSAPSTPKRKRSQGKRKGVQPKKNGSNLE). The span at 98 to 108 (SLSSVSNNVAE) shows a compositional bias: low complexity. Positions 117–126 (PKRKKHRPKV) are enriched in basic residues. Basic and acidic residues-rich tracts occupy residues 127 to 138 (RREAKPKREPKP) and 162 to 171 (KKVEVSKDQD). A compositionally biased stretch (basic residues) spans 243–256 (PKRKRSQGKRKGVQ). The segment at 528-626 (KVDLDDETDR…AFMSLASQFP (99 aa)) is DEMETER. The span at 653–672 (EETMSSPPDHNHSSVTLKNT) shows a compositional bias: polar residues. Disordered stretches follow at residues 653–722 (EETM…SVEV) and 789–830 (SNQV…CSQQ). A compositionally biased stretch (low complexity) spans 687-698 (SRSSSEIAISAH). Residues 699–722 (ESVDKTTDSKEYVDSDRKGSSVEV) are compositionally biased toward basic and acidic residues. The span at 816-830 (KSSVDSSEPGCCSQQ) shows a compositional bias: polar residues. Lys901 is covalently cross-linked (Glycyl lysine isopeptide (Lys-Gly) (interchain with G-Cter in ubiquitin)). [4Fe-4S] cluster is bound by residues Cys1038, Cys1045, Cys1048, and Cys1054.

This sequence belongs to the DNA glycosylase family. DEMETER subfamily. As to quaternary structure, interacts (via the central region) with ZDP. Binds to RPA2A. Interacts with XRCC1. Interacts probably with a complex made of MBD7, IDM1, IDM2 and IDM3. Interacts with APE1L. The cofactor is [4Fe-4S] cluster. Expressed ubiquitously in both vegetative and reproductive organs.

It is found in the nucleus. Its subcellular location is the nucleolus. The enzyme catalyses 2'-deoxyribonucleotide-(2'-deoxyribose 5'-phosphate)-2'-deoxyribonucleotide-DNA = a 3'-end 2'-deoxyribonucleotide-(2,3-dehydro-2,3-deoxyribose 5'-phosphate)-DNA + a 5'-end 5'-phospho-2'-deoxyribonucleoside-DNA + H(+). With respect to regulation, stimulated by ZDP. Stimulated by XRCC1. Its function is as follows. Bifunctional DNA glycosylase/lyase, which excises 5-methylcytosine (5-meC) and 5-hydroxymethylcytosine (5-hmeC), leaving an apyrimidinic (AP) site that is subsequently incised by the lyase activity. Generates 3'-phosphor-alpha,beta-unsaturated aldehyde (3'-PUA) as a primary 5-meC excision intermediate. Prevents DNA hypermethylation, specifically in the promoter of otherwise silenced loci. May be involved in DNA repair through its nicking activity on methylated DNA. Binds with similar affinity to both methylated and non-methylated DNA. Highly distributive behavior on DNA substrates containing multiple 5-meC residues. Involved with Pol IV in the remodeling of the 5S rDNA chromatin via DNA methylation modifications during the first days of development post-germination. Participates in UV-B induced- and oxidative DNA damage repair. This Arabidopsis thaliana (Mouse-ear cress) protein is DNA glycosylase/AP lyase ROS1.